The chain runs to 170 residues: N-alpha-acetyltransferase 50 (170 aa).

Positions 6 to 155 (IELGDVTPHN…DAHVLQKNLK (150 aa)) constitute an N-acetyltransferase domain. Residue Tyr-31 participates in substrate binding. Tyr-73 is an active-site residue. Met-75 provides a ligand contact to substrate. 77 to 90 (LGCLAPYRRLGIGT) provides a ligand contact to acetyl-CoA. 79-90 (CLAPYRRLGIGT) is a binding site for CoA. His-112 is a catalytic residue. Residue 117-126 (NESAIDFYRK) participates in CoA binding. Residues 138–141 (YYKR) are substrate.

Belongs to the acetyltransferase family. GNAT subfamily.

The protein localises to the cytoplasm. It localises to the nucleus. It catalyses the reaction N-terminal L-methionyl-L-alanyl-[protein] + acetyl-CoA = N-terminal N(alpha)-acetyl-L-methionyl-L-alanyl-[protein] + CoA + H(+). It carries out the reaction N-terminal L-methionyl-L-seryl-[protein] + acetyl-CoA = N-terminal N(alpha)-acetyl-L-methionyl-L-seryl-[protein] + CoA + H(+). The enzyme catalyses N-terminal L-methionyl-L-valyl-[protein] + acetyl-CoA = N-terminal N(alpha)-acetyl-L-methionyl-L-valyl-[protein] + CoA + H(+). The catalysed reaction is N-terminal L-methionyl-L-threonyl-[protein] + acetyl-CoA = N-terminal N(alpha)-acetyl-L-methionyl-L-threonyl-[protein] + CoA + H(+). It catalyses the reaction N-terminal L-methionyl-L-lysyl-[protein] + acetyl-CoA = N-terminal N(alpha)-acetyl-L-methionyl-L-lysyl-[protein] + CoA + H(+). It carries out the reaction N-terminal L-methionyl-L-leucyl-[protein] + acetyl-CoA = N-terminal N(alpha)-acetyl-L-methionyl-L-leucyl-[protein] + CoA + H(+). The enzyme catalyses N-terminal L-methionyl-L-phenylalanyl-[protein] + acetyl-CoA = N-terminal N(alpha)-acetyl-L-methionyl-L-phenylalanyl-[protein] + CoA + H(+). The catalysed reaction is N-terminal L-methionyl-L-tyrosyl-[protein] + acetyl-CoA = N-terminal N(alpha)-acetyl-L-methionyl-L-tyrosyl-[protein] + CoA + H(+). In terms of biological role, N-alpha-acetyltransferase that acetylates the N-terminus of proteins that retain their initiating methionine. Has a broad substrate specificity: able to acetylate the initiator methionine of most peptides, except for those with a proline in second position. Also displays N-epsilon-acetyltransferase activity by mediating acetylation of the side chain of specific lysines on proteins. The relevance of N-epsilon-acetyltransferase activity is however unclear. Required for sister chromatid cohesion during mitosis by promoting binding of CDCA5/sororin to cohesin. The polypeptide is N-alpha-acetyltransferase 50 (naa50) (Xenopus laevis (African clawed frog)).